The sequence spans 515 residues: Bifunctional purine biosynthesis protein PurH (515 aa).

An MGS-like domain is found at 1–145; that stretch reads MTKRALISVS…KNHASVTVVV (145 aa).

This sequence belongs to the PurH family.

The enzyme catalyses (6R)-10-formyltetrahydrofolate + 5-amino-1-(5-phospho-beta-D-ribosyl)imidazole-4-carboxamide = 5-formamido-1-(5-phospho-D-ribosyl)imidazole-4-carboxamide + (6S)-5,6,7,8-tetrahydrofolate. It catalyses the reaction IMP + H2O = 5-formamido-1-(5-phospho-D-ribosyl)imidazole-4-carboxamide. It participates in purine metabolism; IMP biosynthesis via de novo pathway; 5-formamido-1-(5-phospho-D-ribosyl)imidazole-4-carboxamide from 5-amino-1-(5-phospho-D-ribosyl)imidazole-4-carboxamide (10-formyl THF route): step 1/1. The protein operates within purine metabolism; IMP biosynthesis via de novo pathway; IMP from 5-formamido-1-(5-phospho-D-ribosyl)imidazole-4-carboxamide: step 1/1. This is Bifunctional purine biosynthesis protein PurH from Streptococcus mutans serotype c (strain ATCC 700610 / UA159).